Here is a 328-residue protein sequence, read N- to C-terminus: Beta-ketoacyl-[acyl-carrier-protein] synthase III 2 (328 aa).

Active-site residues include C113 and H255. The tract at residues 256–260 is ACP-binding; that stretch reads QANAR. The active site involves N285.

It belongs to the thiolase-like superfamily. FabH family. As to quaternary structure, homodimer.

The protein localises to the cytoplasm. It carries out the reaction malonyl-[ACP] + acetyl-CoA + H(+) = 3-oxobutanoyl-[ACP] + CO2 + CoA. Its pathway is lipid metabolism; fatty acid biosynthesis. Its function is as follows. Catalyzes the condensation reaction of fatty acid synthesis by the addition to an acyl acceptor of two carbons from malonyl-ACP. Catalyzes the first condensation reaction which initiates fatty acid synthesis and may therefore play a role in governing the total rate of fatty acid production. Possesses both acetoacetyl-ACP synthase and acetyl transacylase activities. Its substrate specificity determines the biosynthesis of branched-chain and/or straight-chain of fatty acids. The sequence is that of Beta-ketoacyl-[acyl-carrier-protein] synthase III 2 from Lactiplantibacillus plantarum (strain ATCC BAA-793 / NCIMB 8826 / WCFS1) (Lactobacillus plantarum).